The following is a 361-amino-acid chain: Adenosine kinase (361 aa).

The Nuclear localization signal motif lies at 7-15 (PKPKKLKVE). Asp34 serves as a coordination point for adenosine. Ser48 serves as a coordination point for Mg(2+). Tyr76 is subject to Phosphotyrosine. Mg(2+) is bound at residue Asn147. Gln305 lines the adenosine pocket. Asp316 is a catalytic residue. The Proton acceptor role is filled by Asp316.

The protein belongs to the carbohydrate kinase PfkB family. As to quaternary structure, monomer. Requires Mg(2+) as cofactor. In terms of tissue distribution, widely expressed. Highly expressed in liver, testis, kidney and spleen (at protein level). In brain, expression in most forebrain structures and the cerebellum is higher than in the midbrain and brainstem (at protein level). Major isoform in testis and kidney. Not detected in most brain regions, except in the cerebellum, where it is expressed at a similar level to that of isoform 2 (at protein level). As to expression, major isoform in spleen and in most brain regions, except in the cerebellum, where it is expressed at a similar level to that of isoform 1 (at protein level).

The protein localises to the nucleus. It localises to the cytoplasm. It catalyses the reaction adenosine + ATP = AMP + ADP + H(+). It functions in the pathway purine metabolism; AMP biosynthesis via salvage pathway; AMP from adenosine: step 1/1. Activity is inhibited by 5-iodotubercidin and 5'-amino-5'-deoxyadenosine. Catalyzes the phosphorylation of the purine nucleoside adenosine at the 5' position in an ATP-dependent manner. Serves as a potential regulator of concentrations of extracellular adenosine and intracellular adenine nucleotides. This is Adenosine kinase (Adk) from Mus musculus (Mouse).